Reading from the N-terminus, the 120-residue chain is NAD(P)H-quinone oxidoreductase subunit 3, chloroplastic (120 aa).

Helical transmembrane passes span 9–29, 64–84, and 88–108; these read IFWA…LISG, MFAL…PWAM, and VLGV…IVGL.

Belongs to the complex I subunit 3 family. In terms of assembly, NDH is composed of at least 16 different subunits, 5 of which are encoded in the nucleus.

It localises to the plastid. The protein localises to the chloroplast thylakoid membrane. It catalyses the reaction a plastoquinone + NADH + (n+1) H(+)(in) = a plastoquinol + NAD(+) + n H(+)(out). The enzyme catalyses a plastoquinone + NADPH + (n+1) H(+)(in) = a plastoquinol + NADP(+) + n H(+)(out). Functionally, NDH shuttles electrons from NAD(P)H:plastoquinone, via FMN and iron-sulfur (Fe-S) centers, to quinones in the photosynthetic chain and possibly in a chloroplast respiratory chain. The immediate electron acceptor for the enzyme in this species is believed to be plastoquinone. Couples the redox reaction to proton translocation, and thus conserves the redox energy in a proton gradient. In Ceratophyllum demersum (Rigid hornwort), this protein is NAD(P)H-quinone oxidoreductase subunit 3, chloroplastic.